We begin with the raw amino-acid sequence, 272 residues long: 4-diphosphocytidyl-2-C-methyl-D-erythritol kinase (272 aa).

The active site involves Lys-14. 92–102 (PMGGGLGGGSS) is an ATP binding site. Asp-132 is a catalytic residue.

Belongs to the GHMP kinase family. IspE subfamily.

The catalysed reaction is 4-CDP-2-C-methyl-D-erythritol + ATP = 4-CDP-2-C-methyl-D-erythritol 2-phosphate + ADP + H(+). It functions in the pathway isoprenoid biosynthesis; isopentenyl diphosphate biosynthesis via DXP pathway; isopentenyl diphosphate from 1-deoxy-D-xylulose 5-phosphate: step 3/6. Functionally, catalyzes the phosphorylation of the position 2 hydroxy group of 4-diphosphocytidyl-2C-methyl-D-erythritol. The sequence is that of 4-diphosphocytidyl-2-C-methyl-D-erythritol kinase from Fervidobacterium nodosum (strain ATCC 35602 / DSM 5306 / Rt17-B1).